Reading from the N-terminus, the 437-residue chain is tRNA wybutosine-synthesizing protein 2 homolog (437 aa).

S-adenosyl-L-methionine is bound by residues Ser-208, Lys-215, Glu-255, and 283–284; that span reads DN. The segment covering 331 to 344 has biased composition (polar residues); it reads SFSGKNPQPPGSSN. The disordered stretch occupies residues 331–374; it reads SFSGKNPQPPGSSNMEKKHWPHPQKITTDKQGNRTTGSCMGEMS.

The protein belongs to the class I-like SAM-binding methyltransferase superfamily. TRM5/TYW2 family.

It catalyses the reaction 4-demethylwyosine(37) in tRNA(Phe) + S-adenosyl-L-methionine = 4-demethyl-7-[(3S)-3-amino-3-carboxypropyl]wyosine(37) in tRNA(Phe) + S-methyl-5'-thioadenosine + H(+). Its pathway is tRNA modification; wybutosine-tRNA(Phe) biosynthesis. Its function is as follows. S-adenosyl-L-methionine-dependent transferase that acts as a component of the wybutosine biosynthesis pathway. Wybutosine is a hyper modified guanosine with a tricyclic base found at the 3'-position adjacent to the anticodon of eukaryotic phenylalanine tRNA. Catalyzes the transfer of the alpha-amino-alpha-carboxypropyl (acp) group from S-adenosyl-L-methionine to the C-7 position of 4-demethylwyosine (imG-14) to produce wybutosine-86. The chain is tRNA wybutosine-synthesizing protein 2 homolog (Trmt12) from Rattus norvegicus (Rat).